A 365-amino-acid polypeptide reads, in one-letter code: Guanine nucleotide-binding protein alpha-6 subunit (365 aa).

Gly2 is lipidated: N-myristoyl glycine. In terms of domain architecture, G-alpha spans 42–364; that stretch reads NRFKILLLGT…NENLRSAGLH (323 aa). The tract at residues 45-58 is G1 motif; sequence KILLLGTAESGKST. GTP-binding positions include 50–57, 187–193, 212–216, 281–284, and Ala336; these read GTAESGKS, VHCRIST, DVGGQ, and NKYD. The Mg(2+) site is built by Ser57 and Thr193. Residues 185–193 are G2 motif; sequence DIVHCRIST. The tract at residues 208–217 is G3 motif; sequence FKMVDVGGQR. The tract at residues 277–284 is G4 motif; that stretch reads VLFLNKYD. Residues 334 to 339 form a G5 motif region; the sequence is TTATDT.

It belongs to the G-alpha family. As to quaternary structure, g proteins are composed of 3 units; alpha, beta and gamma. The alpha chain contains the guanine nucleotide binding site.

Its function is as follows. Guanine nucleotide-binding proteins (G proteins) are involved as modulators or transducers in various transmembrane signaling systems. In Caenorhabditis briggsae, this protein is Guanine nucleotide-binding protein alpha-6 subunit (gpa-6).